The sequence spans 98 residues: MEIRVIDTKENKLLGRKEIYFEVIHEGEPTPSRADVKGKLVAMLDLNPEATVVQYIRSYFGSHVSEGYAKAYESKERMLYIEPEYVLRREGIIQEQEE.

The protein belongs to the eukaryotic ribosomal protein eS24 family.

The protein is Small ribosomal subunit protein eS24 of Thermococcus sibiricus (strain DSM 12597 / MM 739).